The sequence spans 278 residues: Probable endonuclease 4 (278 aa).

Residues His69, His109, Glu145, Asp179, His182, His214, Asp227, His229, and Glu259 each contribute to the Zn(2+) site.

It belongs to the AP endonuclease 2 family. It depends on Zn(2+) as a cofactor.

It carries out the reaction Endonucleolytic cleavage to 5'-phosphooligonucleotide end-products.. In terms of biological role, endonuclease IV plays a role in DNA repair. It cleaves phosphodiester bonds at apurinic or apyrimidinic (AP) sites, generating a 3'-hydroxyl group and a 5'-terminal sugar phosphate. This Phocaeicola vulgatus (strain ATCC 8482 / DSM 1447 / JCM 5826 / CCUG 4940 / NBRC 14291 / NCTC 11154) (Bacteroides vulgatus) protein is Probable endonuclease 4.